The chain runs to 289 residues: ATP synthase gamma chain (289 aa).

The protein belongs to the ATPase gamma chain family. In terms of assembly, F-type ATPases have 2 components, CF(1) - the catalytic core - and CF(0) - the membrane proton channel. CF(1) has five subunits: alpha(3), beta(3), gamma(1), delta(1), epsilon(1). CF(0) has three main subunits: a, b and c.

Its subcellular location is the cell inner membrane. Produces ATP from ADP in the presence of a proton gradient across the membrane. The gamma chain is believed to be important in regulating ATPase activity and the flow of protons through the CF(0) complex. This chain is ATP synthase gamma chain, found in Haemophilus influenzae (strain ATCC 51907 / DSM 11121 / KW20 / Rd).